Reading from the N-terminus, the 1046-residue chain is UDP-N-acetylglucosamine--peptide N-acetylglucosaminyltransferase 110 kDa subunit (1046 aa).

At A2 the chain carries N-acetylalanine. Phosphoserine; by GSK3-beta; alternate is present on residues S3 and S4. O-linked (GlcNAc) serine; alternate glycosylation is found at S3 and S4. The O-linked (GlcNAc) serine glycan is linked to D10. An O-linked (GlcNAc) threonine glycan is attached at T12. M18 carries an O-linked (GlcNAc) serine glycan. S20 carries the phosphoserine modification. A TPR 1 repeat occupies 21–54; sequence FQGLAELAHREYQAGDFEAAERHCMQLWRQEPDN. E38 carries an O-linked (GlcNAc) threonine glycan. O-linked (GlcNAc) serine glycans are attached at residues P52 and G56. TPR repeat units lie at residues 89 to 122, 123 to 156, 157 to 190, 191 to 224, 225 to 258, 259 to 292, 293 to 326, 327 to 360, 361 to 394, 395 to 428, and 429 to 462; these read AEAY…KPDF, IDGY…NPDL, YCVR…QPNF, AVAW…DPNF, LDAY…SPNH, AVVH…QPHF, PDAY…CPTH, ADSL…FPEF, AAAH…SPTF, ADAY…NPAF, and ADAH…KPDF. O-linked (GlcNAc) serine; by autocatalysis glycosylation is present at S399. T454 bears the Phosphothreonine; by AMPK mark. The TPR 13; truncated repeat unit spans residues 463–473; that stretch reads PDAYCNLAHCL. The short motif at 464-466 is the DFP motif element; the sequence is DAY. The Nuclear localization signal motif lies at 487–503; that stretch reads KKLVSIVADQLEKNRLP. H508 (proton acceptor) is an active-site residue. UDP-binding positions include Q849, K852, 906–908, 911–914, 930–932, and D935; these read APK, HVRR, and HTT. A Phosphotyrosine modification is found at Y989. Residues 991-1010 are required for phosphatidylinositol 3,4,5-triphosphate binding; sequence KKVRGKVWKQRISSPLFNTK.

The protein belongs to the glycosyltransferase 41 family. O-GlcNAc transferase subfamily. In terms of assembly, monomer; may exist in different oligomerization states in cells. Homotrimer, oligomerizes via TPR repeats 6 and 7. Trimerization is not necessary for activity in vitro, however it increases affinity for UDP-GlcNAc. Component of a THAP1/THAP3-HCFC1-OGT complex. Component of the NSL complex at least composed of MOF/KAT8, KANSL1, KANSL2, KANSL3, MCRS1, PHF20, OGT1/OGT, WDR5 and HCFC1. Found in a complex with KIF5B, RHOT1, RHOT2 and TRAK1. Found in a complex composed of at least SINHCAF, SIN3A, HDAC1, SAP30, RBBP4, OGT and TET1. Component of a complex composed of KMT2E/MLL5 (isoform 3), OGT (isoform 1) and USP7; the complex stabilizes KMT2E/MLL5, preventing KMT2E/MLL5 ubiquitination and proteasomal-mediated degradation. Interacts (via TPRs 1-6) with SIN3A; the interaction mediates transcriptional repression in parallel with histone deacetylase. Interacts (via TPR 5-6) with TET1, TET2 and TET3. Interacts (via TPR repeats 6 and 7) with ATXN10. Interacts with NSD2. Interacts with PROSER1; this interaction mediates TET2 O-GlcNAcylation and stability by promoting the interaction between OGT and TET2. As to quaternary structure, interacts with USP7. (Microbial infection) Interacts with human T-cell leukemia virus 1/HTLV-1 protein Tax; this interaction increases Tax interacting partner CREB1 O-GlcNAcylation. Post-translationally, ubiquitinated by the SCF(FBXO31) complex, leading to its proteasomal degradation. Phosphorylation on Ser-3 or Ser-4 by GSK3-beta positively regulates its activity. Phosphorylation at Thr-454 by AMPK promotes nuclear localization. In terms of processing, glycosylated via autocatalysis; O-GlcNAcylation at Ser-399 promotes nuclear localization. Post-translationally, glycosylated via autocatalysis; does not affect the enzyme activity but regulates substrate selectivity. Highly expressed in pancreas and to a lesser extent in skeletal muscle, heart, brain and placenta. Present in trace amounts in lung and liver.

Its subcellular location is the nucleus. It is found in the cytoplasm. It localises to the mitochondrion. The protein resides in the membrane. The protein localises to the cell membrane. Its subcellular location is the mitochondrion membrane. It is found in the cell projection. The catalysed reaction is L-seryl-[protein] + UDP-N-acetyl-alpha-D-glucosamine = 3-O-(N-acetyl-beta-D-glucosaminyl)-L-seryl-[protein] + UDP + H(+). The enzyme catalyses L-threonyl-[protein] + UDP-N-acetyl-alpha-D-glucosamine = 3-O-(N-acetyl-beta-D-glucosaminyl)-L-threonyl-[protein] + UDP + H(+). It participates in protein modification; protein glycosylation. With respect to regulation, subject to product inhibition by UDP. Catalyzes the transfer of a single N-acetylglucosamine from UDP-GlcNAc to a serine or threonine residue in cytoplasmic and nuclear proteins resulting in their modification with a beta-linked N-acetylglucosamine (O-GlcNAc). Glycosylates a large and diverse number of proteins including histone H2B, AKT1, AMPK, ATG4B, CAPRIN1, EZH2, FNIP1, GSDMD, KRT7, LMNA, LMNB1, LMNB2, RPTOR, HOXA1, PFKL, KMT2E/MLL5, MAPT/TAU, TET2, RBL2, RET, NOD2 and HCFC1. Can regulate their cellular processes via cross-talk between glycosylation and phosphorylation or by affecting proteolytic processing. Involved in insulin resistance in muscle and adipocyte cells via glycosylating insulin signaling components and inhibiting the 'Thr-308' phosphorylation of AKT1, enhancing IRS1 phosphorylation and attenuating insulin signaling. Involved in glycolysis regulation by mediating glycosylation of 6-phosphofructokinase PFKL, inhibiting its activity. Plays a key role in chromatin structure by mediating O-GlcNAcylation of 'Ser-112' of histone H2B: recruited to CpG-rich transcription start sites of active genes via its interaction with TET proteins (TET1, TET2 or TET3). As part of the NSL complex indirectly involved in acetylation of nucleosomal histone H4 on several lysine residues. O-GlcNAcylation of 'Ser-75' of EZH2 increases its stability, and facilitating the formation of H3K27me3 by the PRC2/EED-EZH2 complex. Stabilizes KMT2E/MLL5 by mediating its glycosylation, thereby preventing KMT2E/MLL5 ubiquitination. Regulates circadian oscillation of the clock genes and glucose homeostasis in the liver. Stabilizes clock proteins BMAL1 and CLOCK through O-glycosylation, which prevents their ubiquitination and subsequent degradation. Promotes the CLOCK-BMAL1-mediated transcription of genes in the negative loop of the circadian clock such as PER1/2 and CRY1/2. O-glycosylates HCFC1 and regulates its proteolytic processing and transcriptional activity. Component of a THAP1/THAP3-HCFC1-OGT complex that is required for the regulation of the transcriptional activity of RRM1. Regulates mitochondrial motility in neurons by mediating glycosylation of TRAK1. Promotes autophagy by mediating O-glycosylation of ATG4B. Acts as a regulator of mTORC1 signaling by mediating O-glycosylation of RPTOR and FNIP1: O-GlcNAcylation of RPTOR in response to glucose sufficiency promotes activation of the mTORC1 complex. Its function is as follows. The mitochondrial isoform (mOGT) is cytotoxic and triggers apoptosis in several cell types including INS1, an insulinoma cell line. Functionally, has N-acetylglucosaminyltransferase activity: glycosylates proteins, such as HNRNPU, NEUROD1, NUP62 and PDCD6IP. Displays specific substrate selectivity compared to other isoforms. This Homo sapiens (Human) protein is UDP-N-acetylglucosamine--peptide N-acetylglucosaminyltransferase 110 kDa subunit.